Here is a 137-residue protein sequence, read N- to C-terminus: Succinate dehydrogenase cytochrome b560 subunit (137 aa).

A run of 2 helical transmembrane segments spans residues 31–51 and 60–80; these read AFLA…DLSL and FFFL…FTLL. Heme is bound at residue H85. Residues 106–126 form a helical membrane-spanning segment; that stretch reads VYTSGIIMLFCAAFLALLNII.

It belongs to the cytochrome b560 family. In terms of assembly, forms part of complex II containing four subunits: a 70 kDa flavoprotein (FP), a 27 kDa iron-sulfur protein (IP), a cytochrome B and a membrane-anchoring protein. Heme is required as a cofactor.

It localises to the mitochondrion inner membrane. It functions in the pathway carbohydrate metabolism; tricarboxylic acid cycle. In terms of biological role, membrane-anchoring subunit of succinate dehydrogenase (SDH) that is involved in complex II of the mitochondrial electron transport chain and is responsible for transferring electrons from succinate to ubiquinone (coenzyme Q). The polypeptide is Succinate dehydrogenase cytochrome b560 subunit (SDH3) (Marchantia polymorpha (Common liverwort)).